Here is a 944-residue protein sequence, read N- to C-terminus: Isoleucine--tRNA ligase (944 aa).

The short motif at 58-68 is the 'HIGH' region element; that stretch reads PYANGDIHIGH. Glu568 serves as a coordination point for L-isoleucyl-5'-AMP. Residues 609–613 carry the 'KMSKS' region motif; the sequence is KMSKS. Lys612 is an ATP binding site. Residues Cys907, Cys910, Cys927, and Cys930 each contribute to the Zn(2+) site.

Belongs to the class-I aminoacyl-tRNA synthetase family. IleS type 1 subfamily. Monomer. It depends on Zn(2+) as a cofactor.

Its subcellular location is the cytoplasm. It carries out the reaction tRNA(Ile) + L-isoleucine + ATP = L-isoleucyl-tRNA(Ile) + AMP + diphosphate. Functionally, catalyzes the attachment of isoleucine to tRNA(Ile). As IleRS can inadvertently accommodate and process structurally similar amino acids such as valine, to avoid such errors it has two additional distinct tRNA(Ile)-dependent editing activities. One activity is designated as 'pretransfer' editing and involves the hydrolysis of activated Val-AMP. The other activity is designated 'posttransfer' editing and involves deacylation of mischarged Val-tRNA(Ile). The sequence is that of Isoleucine--tRNA ligase from Psychromonas ingrahamii (strain DSM 17664 / CCUG 51855 / 37).